We begin with the raw amino-acid sequence, 941 residues long: UvrABC system protein A (941 aa).

31–38 (GLSGSGKS) is a binding site for ATP. The segment at 253–280 (CPICGYSMRELEPRLFSFNNPAGACPTC) adopts a C4-type zinc-finger fold. 2 ABC transporter domains span residues 310 to 587 (WDRR…PESL) and 607 to 937 (ANPE…RFLK). 640–647 (GVSGSGKS) serves as a coordination point for ATP. The segment at 740–766 (CEACQGDGVIKVEMHFLPDIYVPCDQC) adopts a C4-type zinc-finger fold.

This sequence belongs to the ABC transporter superfamily. UvrA family. In terms of assembly, forms a heterotetramer with UvrB during the search for lesions.

The protein resides in the cytoplasm. Its function is as follows. The UvrABC repair system catalyzes the recognition and processing of DNA lesions. UvrA is an ATPase and a DNA-binding protein. A damage recognition complex composed of 2 UvrA and 2 UvrB subunits scans DNA for abnormalities. When the presence of a lesion has been verified by UvrB, the UvrA molecules dissociate. This is UvrABC system protein A from Salmonella typhi.